Reading from the N-terminus, the 109-residue chain is Guanylin (109 aa).

Residues 1 to 21 form the signal peptide; it reads MNTFLFPTLCLLGVWAALAGG. The propeptide occupies 22–94; the sequence is VTVKDGEFSF…LERLETIAQD (73 aa). 3 disulfides stabilise this stretch: cysteine 63–cysteine 76, cysteine 98–cysteine 106, and cysteine 101–cysteine 109.

Belongs to the guanylin family.

The protein localises to the secreted. Endogenous activator of intestinal guanylate cyclase. It stimulates this enzyme through the same receptor binding region as the heat-stable enterotoxins. In Sus scrofa (Pig), this protein is Guanylin (GUCA2A).